A 391-amino-acid chain; its full sequence is MDQFIKQDETGDLIETGMNVANHFLSAPIQGTNLLSKATIIPGVAPVLIGNPEQKNIQYPTASHQGSKSKGRSSGAKPIIVSSSEVGTGGTQIPEPLFAQTGQGGTVTTVYQDPTIQPTGSYRSVELAKIGKERMINRFVEKPRTSTPVTEFKRGGPGAAAQGQTIQEEGIDGNGASAGSKERSGSLSGATPYAHLSLPQQDSTPANVGIAQQSAISANEIMDLLRGMDARLQHLEQKVDKVLAQGSMVTQIKNELSTVKTTLATIEGMMATVKIMDPGNPTGVPVDELRRSFSDHVTIVSGPGDVSFSSSEEPTLYLDELARPIPKPRPAKQPKPQPVKDLAGRKVMITKMITDCVANPQMKQAFEQRLAKASTEDALNDIKRDIIRSAI.

A phosphothreonine mark is found at threonine 10, threonine 16, and threonine 39. Residue serine 69 is modified to Phosphoserine. 2 disordered regions span residues 82–101 and 143–208; these read SSSEVGTGGTQIPEPLFAQT and PRTS…PANV. Threonine 91, threonine 150, and threonine 165 each carry phosphothreonine. The residue at position 188 (serine 188) is a Phosphoserine. Residues 198–208 are compositionally biased toward polar residues; sequence LPQQDSTPANV. The stretch at 218–245 forms a coiled coil; that stretch reads ANEIMDLLRGMDARLQHLEQKVDKVLAQ. At threonine 250 the chain carries Phosphothreonine. Serine 257 bears the Phosphoserine mark. Phosphothreonine is present on residues threonine 258 and threonine 282. 2 positions are modified to phosphoserine: serine 292 and serine 294. The residue at position 298 (threonine 298) is a Phosphothreonine. 2 positions are modified to phosphoserine: serine 301 and serine 374. The segment at 343 to 391 is interaction with the nucleoprotein; it reads AGRKVMITKMITDCVANPQMKQAFEQRLAKASTEDALNDIKRDIIRSAI. The segment at 348–391 is x domain (XD); sequence MITKMITDCVANPQMKQAFEQRLAKASTEDALNDIKRDIIRSAI. Phosphothreonine is present on threonine 375.

It belongs to the rubulavirus/avulavirus P protein family. As to quaternary structure, homotetramer. Interacts (via multimerization domain) with polymerase L; this interaction forms the polymerase L-P complex. Interacts (via N-terminus) with N0 (via Ncore); this interaction allows P to chaperon N0 to avoid N polymerization before encapsidation. Interacts (via C-terminus) with N-RNA template; this interaction positions the polymerase on the template for both transcription and replication. Interacts with host RPS6KB1 kinase; this interaction may play a role in the viral replication and transcription.

The protein resides in the virion. Functionally, essential cofactor of the RNA polymerase L that plays a central role in the transcription and replication by forming the polymerase complex with RNA polymerase L and recruiting L to the genomic N-RNA template for RNA synthesis. Also plays a central role in the encapsidation of nascent RNA chains by forming the encapsidation complex with the nucleocapsid protein N (N-P complex). Acts as a chaperone for newly synthesized free N protein, so-called N0, allowing encapsidation of nascent RNA chains during replication. The nucleoprotein protein N prevents excessive phosphorylation of P, which leads to down-regulation of viral transcription/ replication. Participates, together with N, in the formation of viral factories (viroplasms), which are large inclusions in the host cytoplasm where replication takes place. This Mumps orthorubulavirus (MuV) protein is Phosphoprotein (V/P).